A 184-amino-acid chain; its full sequence is uncharacterized protein (184 aa).

Positions 1–24 are disordered; the sequence is MGISDQINSNLSSQSPFTVSTNPS.

This is an uncharacterized protein from Dictyostelium discoideum (Social amoeba).